The following is a 260-amino-acid chain: Small ribosomal subunit protein uS2 (260 aa).

The disordered stretch occupies residues 225 to 260 (KGQTQTEAAPNAQAAPEAAAPAEQPAEEAAAASSEG). The span at 231 to 260 (EAAPNAQAAPEAAAPAEQPAEEAAAASSEG) shows a compositional bias: low complexity.

Belongs to the universal ribosomal protein uS2 family.

This is Small ribosomal subunit protein uS2 from Rhodopirellula baltica (strain DSM 10527 / NCIMB 13988 / SH1).